The following is a 460-amino-acid chain: Bifunctional protein GlmU (460 aa).

The tract at residues 1–229 (MTNYAIILAA…FNESLGVNDR (229 aa)) is pyrophosphorylase. UDP-N-acetyl-alpha-D-glucosamine-binding positions include 8 to 11 (LAAG), Lys22, Gln72, and 77 to 78 (GT). Residue Asp102 participates in Mg(2+) binding. The UDP-N-acetyl-alpha-D-glucosamine site is built by Gly139, Glu154, Asn169, and Asn227. Asn227 is a binding site for Mg(2+). The interval 230-250 (VALATAETVMRQRITQKHMVN) is linker. An N-acetyltransferase region spans residues 251–460 (GVTFQNPETV…RLAHHPSRSK (210 aa)). UDP-N-acetyl-alpha-D-glucosamine contacts are provided by Arg332 and Lys350. His362 (proton acceptor) is an active-site residue. Tyr365 and Asn376 together coordinate UDP-N-acetyl-alpha-D-glucosamine. Acetyl-CoA-binding positions include Ala379, 385–386 (NY), Ser404, Ala422, and Arg439.

In the N-terminal section; belongs to the N-acetylglucosamine-1-phosphate uridyltransferase family. This sequence in the C-terminal section; belongs to the transferase hexapeptide repeat family. As to quaternary structure, homotrimer. Mg(2+) is required as a cofactor.

It localises to the cytoplasm. It carries out the reaction alpha-D-glucosamine 1-phosphate + acetyl-CoA = N-acetyl-alpha-D-glucosamine 1-phosphate + CoA + H(+). The catalysed reaction is N-acetyl-alpha-D-glucosamine 1-phosphate + UTP + H(+) = UDP-N-acetyl-alpha-D-glucosamine + diphosphate. It participates in nucleotide-sugar biosynthesis; UDP-N-acetyl-alpha-D-glucosamine biosynthesis; N-acetyl-alpha-D-glucosamine 1-phosphate from alpha-D-glucosamine 6-phosphate (route II): step 2/2. The protein operates within nucleotide-sugar biosynthesis; UDP-N-acetyl-alpha-D-glucosamine biosynthesis; UDP-N-acetyl-alpha-D-glucosamine from N-acetyl-alpha-D-glucosamine 1-phosphate: step 1/1. Its pathway is bacterial outer membrane biogenesis; LPS lipid A biosynthesis. Its function is as follows. Catalyzes the last two sequential reactions in the de novo biosynthetic pathway for UDP-N-acetylglucosamine (UDP-GlcNAc). The C-terminal domain catalyzes the transfer of acetyl group from acetyl coenzyme A to glucosamine-1-phosphate (GlcN-1-P) to produce N-acetylglucosamine-1-phosphate (GlcNAc-1-P), which is converted into UDP-GlcNAc by the transfer of uridine 5-monophosphate (from uridine 5-triphosphate), a reaction catalyzed by the N-terminal domain. The chain is Bifunctional protein GlmU from Streptococcus pyogenes serotype M28 (strain MGAS6180).